A 259-amino-acid polypeptide reads, in one-letter code: Virion protein US10 homolog (259 aa).

A zinc finger lies at 162 to 174; it reads CAHWCCLGHAFGC.

This sequence belongs to the herpesviridae US10 family. In terms of processing, phosphorylated.

It is found in the virion tegument. It localises to the host nucleus matrix. This Equine herpesvirus 4 (strain 1942) (EHV-4) protein is Virion protein US10 homolog.